A 213-amino-acid chain; its full sequence is Probable GTP-binding protein EngB (213 aa).

Positions 25–203 constitute an EngB-type G domain; the sequence is EGTEVAFAGR…EDVLNGWLLP (179 aa). GTP contacts are provided by residues 33–40, 60–64, 80–83, 147–150, and 179–184; these read GRSNAGKS, GRTQL, DLPG, TKAD, and AQMFSA. Mg(2+) is bound by residues serine 40 and threonine 62.

It belongs to the TRAFAC class TrmE-Era-EngA-EngB-Septin-like GTPase superfamily. EngB GTPase family. Mg(2+) serves as cofactor.

In terms of biological role, necessary for normal cell division and for the maintenance of normal septation. This is Probable GTP-binding protein EngB from Saccharophagus degradans (strain 2-40 / ATCC 43961 / DSM 17024).